We begin with the raw amino-acid sequence, 282 residues long: Shikimate dehydrogenase (NADP(+)) (282 aa).

Shikimate-binding positions include 16-18 (SLS) and Thr-63. Lys-67 serves as the catalytic Proton acceptor. 2 residues coordinate shikimate: Asn-88 and Asp-103. NADP(+) contacts are provided by residues 128 to 132 (GAGGA) and Gly-243.

The protein belongs to the shikimate dehydrogenase family. Homodimer.

The enzyme catalyses shikimate + NADP(+) = 3-dehydroshikimate + NADPH + H(+). It functions in the pathway metabolic intermediate biosynthesis; chorismate biosynthesis; chorismate from D-erythrose 4-phosphate and phosphoenolpyruvate: step 4/7. In terms of biological role, involved in the biosynthesis of the chorismate, which leads to the biosynthesis of aromatic amino acids. Catalyzes the reversible NADPH linked reduction of 3-dehydroshikimate (DHSA) to yield shikimate (SA). The polypeptide is Shikimate dehydrogenase (NADP(+)) (Xylella fastidiosa (strain Temecula1 / ATCC 700964)).